The chain runs to 315 residues: Glycine--tRNA ligase alpha subunit (315 aa).

Belongs to the class-II aminoacyl-tRNA synthetase family. In terms of assembly, tetramer of two alpha and two beta subunits.

It localises to the cytoplasm. The catalysed reaction is tRNA(Gly) + glycine + ATP = glycyl-tRNA(Gly) + AMP + diphosphate. The sequence is that of Glycine--tRNA ligase alpha subunit from Pseudomonas aeruginosa (strain LESB58).